The sequence spans 46 residues: MTKRTLGGTNLKKARTSGFRARMKTAAGRNVLKNRRRKGRHKLISV.

Belongs to the bacterial ribosomal protein bL34 family.

The protein localises to the plastid. It is found in the chloroplast. This Guillardia theta (Cryptophyte) protein is Large ribosomal subunit protein bL34c (rpl34).